The primary structure comprises 95 residues: Protein TusB (95 aa).

It belongs to the DsrH/TusB family. As to quaternary structure, heterohexamer, formed by a dimer of trimers. The hexameric TusBCD complex contains 2 copies each of TusB, TusC and TusD. The TusBCD complex interacts with TusE.

The protein resides in the cytoplasm. Functionally, part of a sulfur-relay system required for 2-thiolation of 5-methylaminomethyl-2-thiouridine (mnm(5)s(2)U) at tRNA wobble positions. This chain is Protein TusB, found in Buchnera aphidicola subsp. Schizaphis graminum (strain Sg).